We begin with the raw amino-acid sequence, 614 residues long: Two-component response regulator ORR33 (614 aa).

The region spanning arginine 14–alanine 139 is the Response regulatory domain. Aspartate 67 bears the 4-aspartylphosphate mark. Residues arginine 193–asparagine 220 form a disordered region. The segment covering arginine 205–alanine 217 has biased composition (gly residues).

The protein belongs to the ARR family. Type-B subfamily. Two-component system major event consists of a His-to-Asp phosphorelay between a sensor histidine kinase (HK) and a response regulator (RR). In plants, the His-to-Asp phosphorelay involves an additional intermediate named Histidine-containing phosphotransfer protein (HPt). This multistep phosphorelay consists of a His-Asp-His-Asp sequential transfer of a phosphate group between first a His and an Asp of the HK protein, followed by the transfer to a conserved His of the HPt protein and finally the transfer to an Asp in the receiver domain of the RR protein.

In terms of biological role, functions as a response regulator involved in His-to-Asp phosphorelay signal transduction system. Phosphorylation of the Asp residue in the receiver domain activates the ability of the protein to promote the transcription of target genes. May directly activate some type-A response regulators in response to cytokinins. The sequence is that of Two-component response regulator ORR33 from Oryza sativa subsp. indica (Rice).